We begin with the raw amino-acid sequence, 242 residues long: Enolase-phosphatase E1 (242 aa).

It belongs to the HAD-like hydrolase superfamily. MasA/MtnC family. As to quaternary structure, monomer. Requires Mg(2+) as cofactor.

It carries out the reaction 5-methylsulfanyl-2,3-dioxopentyl phosphate + H2O = 1,2-dihydroxy-5-(methylsulfanyl)pent-1-en-3-one + phosphate. It participates in amino-acid biosynthesis; L-methionine biosynthesis via salvage pathway; L-methionine from S-methyl-5-thio-alpha-D-ribose 1-phosphate: step 3/6. The protein operates within amino-acid biosynthesis; L-methionine biosynthesis via salvage pathway; L-methionine from S-methyl-5-thio-alpha-D-ribose 1-phosphate: step 4/6. In terms of biological role, bifunctional enzyme that catalyzes the enolization of 2,3-diketo-5-methylthiopentyl-1-phosphate (DK-MTP-1-P) into the intermediate 2-hydroxy-3-keto-5-methylthiopentenyl-1-phosphate (HK-MTPenyl-1-P), which is then dephosphorylated to form the acireductone 1,2-dihydroxy-3-keto-5-methylthiopentene (DHK-MTPene). The protein is Enolase-phosphatase E1 of Synechococcus sp. (strain WH7803).